A 97-amino-acid polypeptide reads, in one-letter code: Putative septation protein SpoVG (97 aa).

It belongs to the SpoVG family.

In terms of biological role, could be involved in septation. This Borrelia garinii subsp. bavariensis (strain ATCC BAA-2496 / DSM 23469 / PBi) (Borreliella bavariensis) protein is Putative septation protein SpoVG.